A 130-amino-acid chain; its full sequence is Glycine cleavage system H protein (130 aa).

In terms of domain architecture, Lipoyl-binding spans 24–106 (TLTIGITDHA…YGEGWIMRIR (83 aa)). Residue lysine 65 is modified to N6-lipoyllysine. The interval 111 to 130 (DDLEQLLDPEDYQDLVADEE) is disordered.

It belongs to the GcvH family. As to quaternary structure, the glycine cleavage system is composed of four proteins: P, T, L and H. The cofactor is (R)-lipoate.

In terms of biological role, the glycine cleavage system catalyzes the degradation of glycine. The H protein shuttles the methylamine group of glycine from the P protein to the T protein. The polypeptide is Glycine cleavage system H protein (Alkalilimnicola ehrlichii (strain ATCC BAA-1101 / DSM 17681 / MLHE-1)).